Consider the following 147-residue polypeptide: uncharacterized protein (147 aa).

Positions 44 to 147 (LVGYIDKEIH…LKSIKERLSI (104 aa)) constitute an HTH LytTR-type domain.

It localises to the cytoplasm. This is an uncharacterized protein from Staphylococcus aureus (strain COL).